The chain runs to 701 residues: F-box/LRR-repeat protein 17 (701 aa).

3 disordered regions span residues 73–93, 227–250, and 279–321; these read SAGLEEEPPLSPPPPPPRDGA, GGGGPAGGGASPPRPPDAGCCQAP, and VRAG…IPDI. Over residues 81-90 the composition is skewed to pro residues; that stretch reads PLSPPPPPPR. Residues 227-236 show a composition bias toward gly residues; sequence GGGGPAGGGA. Residues 285–294 are compositionally biased toward polar residues; that stretch reads APSSAQQQPE. Residues 318–365 enclose the F-box domain; the sequence is IPDINQLPPSILLKIFSNLSLNERCLSASLVCKYWRDLCLDFQFWKQL.

This sequence belongs to the FBXL17 family. As to quaternary structure, part of the SCF (SKP1-CUL1-F-box) E3 ubiquitin-protein ligase complex SCF(FBXL17) composed of CUL1, SKP1, RBX1 and FBXL17. Interacts with BTB domain-containing proteins such as KLHL12, BCL6 and BACH1; specifically recognizes and binds a conserved degron of non-consecutive residues present at the interface of BTB dimers of aberrant composition. Interacts with SUFU. Interacts with PRMT1.

The protein localises to the cytoplasm. It is found in the nucleus. Its function is as follows. Substrate-recognition component of the SCF(FBXL17) E3 ubiquitin ligase complex, a key component of a quality control pathway required to ensure functional dimerization of BTB domain-containing proteins (dimerization quality control, DQC). FBXL17 specifically recognizes and binds a conserved degron of non-consecutive residues present at the interface of BTB dimers of aberrant composition: aberrant BTB dimer are then ubiquitinated by the SCF(FBXL17) complex and degraded by the proteasome. The ability of the SCF(FBXL17) complex to eliminate compromised BTB dimers is required for the differentiation and survival of neural crest and neuronal cells. The SCF(FBXL17) complex mediates ubiquitination and degradation of BACH1. The SCF(FBXL17) complex is also involved in the regulation of the hedgehog/smoothened (Hh) signaling pathway by mediating the ubiquitination and degradation of SUFU, allowing the release of GLI1 from SUFU for proper Hh signal transduction. The SCF(FBXL17) complex mediates ubiquitination and degradation of PRMT1. The protein is F-box/LRR-repeat protein 17 of Mus musculus (Mouse).